A 520-amino-acid chain; its full sequence is D-aminopeptidase (520 aa).

Catalysis depends on serine 62, which acts as the Nucleophile. Lysine 65 serves as the catalytic Proton donor/acceptor. The tract at residues 477 to 487 (QRSMDAPSPGE) is important for specificity. Aspartate 481 is a substrate binding site.

This sequence belongs to the peptidase S12 family. Homodimer.

The catalysed reaction is Release of an N-terminal D-amino acid from a peptide, Xaa-|-Yaa-, in which Xaa is preferably D-Ala, D-Ser or D-Thr. D-amino acid amides and methyl esters also are hydrolyzed, as is glycine amide.. Its activity is regulated as follows. Inhibited by beta-lactam compounds such as 6-aminopenicillic acid, 7-aminocephalosporanic acid, benzylpenicillin and ampicillin. Inhibited by p-chloromercuribenzoate. Functionally, hydrolyzes N-terminal residues in D-amino acid-containing peptides. The sequence is that of D-aminopeptidase (dap) from Brucella anthropi (Ochrobactrum anthropi).